Here is a 172-residue protein sequence, read N- to C-terminus: Light-harvesting complex-like protein OHP2, chloroplastic (172 aa).

The transit peptide at methionine 1–cysteine 43 directs the protein to the chloroplast. The Stromal portion of the chain corresponds to serine 44–arginine 135. A disordered region spans residues glutamine 45–lysine 90. Pro residues predominate over residues lysine 64–glutamine 82. A helical membrane pass occupies residues tryptophan 136–valine 156. Residues aspartate 157–glutamate 172 lie on the Lumenal side of the membrane.

This sequence belongs to the ELIP/psbS family. As to quaternary structure, component of a high molecular weight complex containing OHP1, OHP2 and HCF244, and PSII core proteins D1/D2, HCF136 and HCF173. Forms a trimeric complex with OHP1 and HCF244 that mutually stabilizes each subunit.

It localises to the plastid. The protein resides in the chloroplast thylakoid membrane. May play a photoprotective role within PSI in response to light stress. Forms a trimeric complex with OHP1 and HCF244 that is required to promote PSII core subunit assembly. The trimeric complex forms a transient PSII reaction center-like complex with PsbA, PsbD, PsbE, PsbF and PsbI subunits in thylakoids for early assembly of PSII as well as PSII repair. The trimeric complex is required for the recruitment of ribosomes to the psbA mRNA during PSII biogenesis and repair. Forms a heterodimer with OHP1 that binds chlorophylls and carotenoids, and that may function in the delivery of pigments to the PsbA subunit of PSII. The protein is Light-harvesting complex-like protein OHP2, chloroplastic of Arabidopsis thaliana (Mouse-ear cress).